Here is a 274-residue protein sequence, read N- to C-terminus: MGLFEKYVSNLNRLLILTMVFAVICAGSTLALGVKKGIDLKGGTMVILKTEKDPDTVTSEASRILGVSDVEAIRSSQGDVIVQVPKYLSADDVNKLARAVGGEVESVQTIGPALGRVFWESVKVAVPLALVAVSIVVFAIFRKPLLSAAVLGALALDLVDALGLMALTGVPLTLASFAGLLMIIGYAVDSNILLSMYTVKRRRVRRVDRAIADSFKTGITMVATTTAAACALFLLSMSEAMFEIAAVVIFGLIADVLNTWIFNAWVIREKIAGR.

6 helical membrane passes run 14 to 34 (LLILTMVFAVICAGSTLALGV), 121 to 141 (SVKVAVPLALVAVSIVVFAIF), 143 to 163 (KPLLSAAVLGALALDLVDALG), 175 to 197 (ASFAGLLMIIGYAVDSNILLSMY), 217 to 237 (TGITMVATTTAAACALFLLSM), and 247 to 267 (VVIFGLIADVLNTWIFNAWVI).

It belongs to the SecD/SecF family. SecF subfamily. Part of the protein translocation apparatus. Forms a complex with SecD.

The protein localises to the cell membrane. In terms of biological role, involved in protein export. The chain is Protein-export membrane protein SecF from Methanopyrus kandleri (strain AV19 / DSM 6324 / JCM 9639 / NBRC 100938).